The primary structure comprises 470 residues: MFNRVQKEINQIINRGFDRTLRLAVTGLSRSGKTAFITSLINQLLSINQHSSQNLPLFEAARNGSILAVKRVSQQDLSVPRFDYESNLNDLSQNPPQWFQSTRGVSETRLAIRFQRQSGLLRHLKERGTLYLDIFDYPGEWLLDLPLLNLDFQQWSQEQIKVTTGVRAELAQNWLSMLQNLDLSAVANEDVLAKIAKSYTDYLHQCKAQGMQFIQPGRFVLPSDLEGAPALQFFPLIHLSGEHWQTLKKTAKSNSYFAVLTKRYNYYRNKIVKGFYENYFSTFDRQVILADCLTPLNHSQQAFLDMQMGLNQLFNNFHYGSRNFLHRLFSPQIDRLMFVATKADHITRDQIPNLVSLMRQIVQEGGRHVEFEGIDTEYTAIAAVRTTKQVIVNQQGKEIKAIQGVRSIDKQLITLYPGTVPSKLPKTEFWQKQPHFDFDSFEPQPLEQGESIPHLRMDAVLQFLLSDRFE.

Positions 27 to 34 (GLSRSGKT) match the Walker A motif motif. GTP-binding residues include Ser-29, Gly-32, Lys-33, Thr-34, Ala-35, Trp-98, Ser-101, Thr-102, Arg-103, Lys-342, Asp-344, and His-345. Residues Gly-32, Lys-33, Thr-34, Ala-35, Trp-98, Ser-101, and Thr-102 each coordinate GDP. The GDP site is built by Lys-342, Asp-344, His-345, Ala-383, and Val-384. Val-384 serves as a coordination point for GTP.

To E.coli YcjX. In terms of assembly, monomer in solution. The cofactor is Mg(2+).

It catalyses the reaction GTP + H2O = GDP + phosphate + H(+). With respect to regulation, alternates between an inactive form bound to GDP and an active form bound to GTP. Likely activated by a guanine nucleotide-exchange factor (GEF). Binds GTP and GDP. Has intrinsic GTPase activity. Does not hydrolyze ATP. May act as a transducer of stress responses. The protein is Ras-like GTPase HI_1637 of Haemophilus influenzae (strain ATCC 51907 / DSM 11121 / KW20 / Rd).